Consider the following 1413-residue polypeptide: MVKLDIHTLAHHLKQERLYVNSEKQLIQRLNADVLKTAEKLYRTAWIAKQQRINLDRLIITSAEASPAECCQHAKILEDTQFVDGYKQLGFQETAYGEFLSRLRENPRLIASSLVAGEKLNQENTQSVIYTVFTSLYGNCIMQEDESYLLQVLRYLIEFELKESDNPRRLLRRGTCAFSILFKLFSEGLFSAKLFLTATLHEPIMQLLVEDEDHLETDPNKLIERFSPAQQEKLFGEKGSDRFRQKVQEMVDSNEAKLVALVNKFIGYLKQNTYCFPHSLRWIVSQMYKTLSCVDRLEVGEVRAMCTDLLLACFICPAVVNPEQYGIISDAPINEVARFNLMQVGRLLQQLAMTGSEEGDPRTKSSLGKFDKSCVAAFLDVVIGGRAVETPPMSSVNLLEGLSRTVVYITYSQLITLVNFMKSVMSGDQLREDRMALDNLLANLPQAKPGKSSSLEMTPYSTPQLSPAATPANKKNRLPIATRSRSRTNVLMDLHMDHEGSAQETIQEVQPEEVLVISLGTGPQLTPGMMSENEVLNMQLSDGGQGDVPVDENKLHGPSNRSNSVSSLDLEGESVSELGAGPSGSNGVEALQLLEHEQATTQDNLDDKLRKFEIRDMMGLTDDRDISETVSETWSTDVLGSDFDPNIDEDRLQEIAGAAAENMLGSLLCLPGSGSVLLDPCTGSTISETTSEAWSVEVLPSDSEAPDLKQEERLQELESCSGLGSTSDDTDVREVSSRPSTPGLSVVSGISATSEDIPNKIEDLRSECSSDFGGKDSVTSPDMDEVTHGAHQLTSPPSQSESLLAMFDPLSSHEGGASAVVRPKVHYARPSHPPPDPPILEGAVGGNEARLPTFGSHILTPAEMEAFKQRHSYPERLVRSRSSDVVSSVRRPMSDPSWNRRPGNEERELPPAAAIGATSLVAAPHSSSSSPSKDSSRGETEERKDSDDEKSDRNRPWWRKRFVSAMPKDDPSPRLSAQAQVAEDILDKYRNAIKRTSPSEGALANYESAEVMGDGESAHDSPRDETLQNISADDLPDSASQAAHPQDSAFSYRDAKKKLRLALCSADSVAFPVLTHSTRNGLPDHTDPEDNEIVCFLKVQIAEAINLQDKNLMAQLQETMRCVCRFDNRTCRKLLASIAEDYRKRAPYIAYLTRCRQGLQTTQAHLERLLQRVLRDKEVANRYFTTVCVRLLLESKEKKIREFIQDFQKLTAADDKTAQVEDFLQFLYGAMAQDVIWQNASEEQLQDAQLAIERSVMNRIFKLAFYPNQDGDILRDQVLHEHIQRLSKVVTANHRALQIPEVYLKEAPWPSAQSEIRTISAYKTPRDKVQCILRMCSTIMNLLSLANEDSVPGADDFVPVLVFVLIKANPPCLLSTVQYISSFYASCLSGEESYWWMQFTAAVEFIKTIDDRK.

The 239-residue stretch at 147–385 folds into the Ras-GAP domain; that stretch reads SYLLQVLRYL…AAFLDVVIGG (239 aa). Position 227 is a phosphoserine (Ser227). Thr390 and Thr458 each carry phosphothreonine. 4 disordered regions span residues 448–474, 540–587, 718–799, and 826–852; these read KPGK…PANK, LSDG…GSNG, ESCS…PPSQ, and HYAR…ARLP. The span at 451–467 shows a compositional bias: polar residues; it reads KSSSLEMTPYSTPQLSP. A Phosphotyrosine modification is found at Tyr460. Ser466 bears the Phosphoserine mark. Position 470 is a phosphothreonine (Thr470). A phosphoserine mark is found at Ser721, Ser725, and Ser736. The span at 737–756 shows a compositional bias: polar residues; the sequence is SRPSTPGLSVVSGISATSED. A Phosphothreonine modification is found at Thr741. Ser745 bears the Phosphoserine mark. Over residues 757-768 the composition is skewed to basic and acidic residues; that stretch reads IPNKIEDLRSEC. Residues Ser856, Ser882, Ser883, Ser888, Ser894, Ser946, Ser972, and Ser999 each carry the phosphoserine modification. Positions 871 to 882 are enriched in basic and acidic residues; the sequence is HSYPERLVRSRS. Residues 871–957 form a disordered region; it reads HSYPERLVRS…DEKSDRNRPW (87 aa). Residues 883-897 are compositionally biased toward low complexity; the sequence is SDVVSSVRRPMSDPS. Over residues 934-955 the composition is skewed to basic and acidic residues; the sequence is DSSRGETEERKDSDDEKSDRNR. The disordered stretch occupies residues 1011–1049; the sequence is VMGDGESAHDSPRDETLQNISADDLPDSASQAAHPQDSA. Positions 1016–1026 are enriched in basic and acidic residues; the sequence is ESAHDSPRDET. Phosphoserine is present on residues Ser1031 and Ser1038. A VPS9 domain is found at 1273-1413; the sequence is ILRDQVLHEH…EFIKTIDDRK (141 aa).

This sequence belongs to the GAPVD1 family. In terms of assembly, interacts with TRIP10/CIP4. Interacts with RAB5A.

It localises to the membrane. Its subcellular location is the endosome. Acts both as a GTPase-activating protein (GAP) and a guanine nucleotide exchange factor (GEF), and participates in various processes such as endocytosis, insulin receptor internalization or LC2A4/GLUT4 trafficking. Acts as a GEF for the Ras-related protein RAB31 by exchanging bound GDP for free GTP, leading to regulate LC2A4/GLUT4 trafficking. In the absence of insulin, it maintains RAB31 in an active state and promotes a futile cycle between LC2A4/GLUT4 storage vesicles and early endosomes, retaining LC2A4/GLUT4 inside the cells. Upon insulin stimulation, it is translocated to the plasma membrane, releasing LC2A4/GLUT4 from intracellular storage vesicles. Also involved in EGFR trafficking and degradation, possibly by promoting EGFR ubiquitination and subsequent degradation by the proteasome. Has GEF activity for Rab5 and GAP activity for Ras. The chain is GTPase-activating protein and VPS9 domain-containing protein 1 (GAPVD1) from Bos taurus (Bovine).